We begin with the raw amino-acid sequence, 644 residues long: ATP-dependent zinc metalloprotease FtsH (644 aa).

Residues 1–13 (MANNDNKHRRSMS) are Cytoplasmic-facing. Residues 14–34 (MLLYIAVAIFVYLLLSNTLLP) traverse the membrane as a helical segment. Residues 35–117 (GLLRQQIQTV…SIPDNSANML (83 aa)) are Extracellular-facing. A helical membrane pass occupies residues 118-138 (MYALIQYGIPLIIFLGIGFFI). The Cytoplasmic segment spans residues 139–644 (NRSLKRAMGD…DEGSSTPSEE (506 aa)). 224 to 231 (GPPGTGKT) serves as a coordination point for ATP. His445 serves as a coordination point for Zn(2+). Glu446 is an active-site residue. Zn(2+) contacts are provided by His449 and Asp522.

The protein in the central section; belongs to the AAA ATPase family. In the C-terminal section; belongs to the peptidase M41 family. As to quaternary structure, homohexamer. It depends on Zn(2+) as a cofactor.

It is found in the cell membrane. Its function is as follows. Acts as a processive, ATP-dependent zinc metallopeptidase for both cytoplasmic and membrane proteins. Plays a role in the quality control of integral membrane proteins. The sequence is that of ATP-dependent zinc metalloprotease FtsH from Lancefieldella parvula (strain ATCC 33793 / DSM 20469 / CCUG 32760 / JCM 10300 / KCTC 3663 / VPI 0546 / 1246) (Atopobium parvulum).